We begin with the raw amino-acid sequence, 487 residues long: Protein nucleotidyltransferase YdiU (487 aa).

Positions 90, 92, 93, 113, 125, 126, 176, and 183 each coordinate ATP. Residue Asp-252 is the Proton acceptor of the active site. Residues Asn-253 and Asp-262 each coordinate Mg(2+). Asp-262 contributes to the ATP binding site.

Belongs to the SELO family. Mg(2+) serves as cofactor. Mn(2+) is required as a cofactor.

The catalysed reaction is L-seryl-[protein] + ATP = 3-O-(5'-adenylyl)-L-seryl-[protein] + diphosphate. The enzyme catalyses L-threonyl-[protein] + ATP = 3-O-(5'-adenylyl)-L-threonyl-[protein] + diphosphate. It carries out the reaction L-tyrosyl-[protein] + ATP = O-(5'-adenylyl)-L-tyrosyl-[protein] + diphosphate. It catalyses the reaction L-histidyl-[protein] + UTP = N(tele)-(5'-uridylyl)-L-histidyl-[protein] + diphosphate. The catalysed reaction is L-seryl-[protein] + UTP = O-(5'-uridylyl)-L-seryl-[protein] + diphosphate. The enzyme catalyses L-tyrosyl-[protein] + UTP = O-(5'-uridylyl)-L-tyrosyl-[protein] + diphosphate. Functionally, nucleotidyltransferase involved in the post-translational modification of proteins. It can catalyze the addition of adenosine monophosphate (AMP) or uridine monophosphate (UMP) to a protein, resulting in modifications known as AMPylation and UMPylation. This is Protein nucleotidyltransferase YdiU from Pseudomonas syringae pv. syringae (strain B728a).